Here is a 276-residue protein sequence, read N- to C-terminus: ARL14 effector protein (276 aa).

The tract at residues 158-177 (KQTEFAPEGGKREKRKLTKA) is disordered. Lysine 176 participates in a covalent cross-link: Glycyl lysine isopeptide (Lys-Gly) (interchain with G-Cter in SUMO2). Phosphoserine is present on residues serine 182 and serine 266.

As to quaternary structure, interacts with ARL14 and MYO1E.

The protein localises to the cytoplasm. Its function is as follows. Through its interaction with ARL14 and MYO1E, may connect MHC class II-containing cytoplasmic vesicles to the actin network and hence controls the movement of these vesicles along the actin cytoskeleton in dendritic cells. The polypeptide is ARL14 effector protein (Arl14ep) (Mus musculus (Mouse)).